The sequence spans 93 residues: Large ribosomal subunit protein uL23 (93 aa).

It belongs to the universal ribosomal protein uL23 family. In terms of assembly, part of the 50S ribosomal subunit. Contacts protein L29, and trigger factor when it is bound to the ribosome.

Its function is as follows. One of the early assembly proteins it binds 23S rRNA. One of the proteins that surrounds the polypeptide exit tunnel on the outside of the ribosome. Forms the main docking site for trigger factor binding to the ribosome. This is Large ribosomal subunit protein uL23 from Aliarcobacter butzleri (strain RM4018) (Arcobacter butzleri).